Consider the following 542-residue polypeptide: Formate--tetrahydrofolate ligase (542 aa).

T53 to T60 lines the ATP pocket.

It belongs to the formate--tetrahydrofolate ligase family.

The enzyme catalyses (6S)-5,6,7,8-tetrahydrofolate + formate + ATP = (6R)-10-formyltetrahydrofolate + ADP + phosphate. The protein operates within one-carbon metabolism; tetrahydrofolate interconversion. In Thermotoga petrophila (strain ATCC BAA-488 / DSM 13995 / JCM 10881 / RKU-1), this protein is Formate--tetrahydrofolate ligase.